The sequence spans 442 residues: C4-dicarboxylate transport protein (442 aa).

8 consecutive transmembrane segments (helical) span residues 19–39 (QLYF…HFEP), 55–75 (LVKM…IAGM), 90–110 (AYFL…AHVV), 161–181 (ILQV…VGDA), 199–219 (LVGI…AFTI), 232–252 (WLVG…LGFV), 318–338 (IYMT…LTLG), and 366–386 (AATL…ILGV).

This sequence belongs to the dicarboxylate/amino acid:cation symporter (DAACS) (TC 2.A.23) family.

The protein resides in the cell inner membrane. Responsible for the transport of dicarboxylates such as succinate, fumarate, and malate from the periplasm across the membrane. The chain is C4-dicarboxylate transport protein from Delftia acidovorans (strain DSM 14801 / SPH-1).